A 217-amino-acid chain; its full sequence is Uracil-DNA glycosylase (217 aa).

D62 (proton acceptor) is an active-site residue.

Belongs to the uracil-DNA glycosylase (UDG) superfamily. UNG family.

The protein localises to the cytoplasm. The catalysed reaction is Hydrolyzes single-stranded DNA or mismatched double-stranded DNA and polynucleotides, releasing free uracil.. Its function is as follows. Excises uracil residues from the DNA which can arise as a result of misincorporation of dUMP residues by DNA polymerase or due to deamination of cytosine. The polypeptide is Uracil-DNA glycosylase (Streptococcus thermophilus (strain ATCC BAA-491 / LMD-9)).